Here is a 168-residue protein sequence, read N- to C-terminus: uncharacterized protein (168 aa).

The PfpI endopeptidase domain maps to 1–166 (MRVLILAENE…FCGELIKILK (166 aa)).

Belongs to the peptidase C56 family.

This is an uncharacterized protein from Archaeoglobus fulgidus (strain ATCC 49558 / DSM 4304 / JCM 9628 / NBRC 100126 / VC-16).